A 745-amino-acid chain; its full sequence is UPF0508 protein YJR030C (745 aa).

It belongs to the UPF0508 family.

This chain is UPF0508 protein YJR030C, found in Saccharomyces cerevisiae (strain ATCC 204508 / S288c) (Baker's yeast).